We begin with the raw amino-acid sequence, 393 residues long: Formate-dependent phosphoribosylglycinamide formyltransferase (393 aa).

Residues 22–23 (EL) and glutamate 82 contribute to the N(1)-(5-phospho-beta-D-ribosyl)glycinamide site. ATP-binding positions include arginine 114, lysine 155, 160–165 (SSGKGQ), 195–198 (EGFV), and glutamate 203. In terms of domain architecture, ATP-grasp spans 119 to 308 (RLAAEELGLP…EFALHVRAIL (190 aa)). Mg(2+) contacts are provided by glutamate 267 and glutamate 279. N(1)-(5-phospho-beta-D-ribosyl)glycinamide contacts are provided by residues aspartate 286, lysine 356, and 363–364 (RR).

The protein belongs to the PurK/PurT family. As to quaternary structure, homodimer.

The catalysed reaction is N(1)-(5-phospho-beta-D-ribosyl)glycinamide + formate + ATP = N(2)-formyl-N(1)-(5-phospho-beta-D-ribosyl)glycinamide + ADP + phosphate + H(+). It participates in purine metabolism; IMP biosynthesis via de novo pathway; N(2)-formyl-N(1)-(5-phospho-D-ribosyl)glycinamide from N(1)-(5-phospho-D-ribosyl)glycinamide (formate route): step 1/1. Its function is as follows. Involved in the de novo purine biosynthesis. Catalyzes the transfer of formate to 5-phospho-ribosyl-glycinamide (GAR), producing 5-phospho-ribosyl-N-formylglycinamide (FGAR). Formate is provided by PurU via hydrolysis of 10-formyl-tetrahydrofolate. The chain is Formate-dependent phosphoribosylglycinamide formyltransferase from Nitratidesulfovibrio vulgaris (strain ATCC 29579 / DSM 644 / CCUG 34227 / NCIMB 8303 / VKM B-1760 / Hildenborough) (Desulfovibrio vulgaris).